The following is a 383-amino-acid chain: Lipid-A-disaccharide synthase (383 aa).

This sequence belongs to the LpxB family.

It carries out the reaction a lipid X + a UDP-2-N,3-O-bis[(3R)-3-hydroxyacyl]-alpha-D-glucosamine = a lipid A disaccharide + UDP + H(+). It participates in bacterial outer membrane biogenesis; LPS lipid A biosynthesis. Its function is as follows. Condensation of UDP-2,3-diacylglucosamine and 2,3-diacylglucosamine-1-phosphate to form lipid A disaccharide, a precursor of lipid A, a phosphorylated glycolipid that anchors the lipopolysaccharide to the outer membrane of the cell. This Myxococcus xanthus (strain DK1622) protein is Lipid-A-disaccharide synthase.